The following is a 37-amino-acid chain: Cytochrome b6-f complex subunit 5 (37 aa).

A helical membrane pass occupies residues 5 to 25; the sequence is LLCGIVLGLIPVTLLGLFVAA.

The protein belongs to the PetG family. In terms of assembly, the 4 large subunits of the cytochrome b6-f complex are cytochrome b6, subunit IV (17 kDa polypeptide, PetD), cytochrome f and the Rieske protein, while the 4 small subunits are PetG, PetL, PetM and PetN. The complex functions as a dimer.

It localises to the cellular thylakoid membrane. Functionally, component of the cytochrome b6-f complex, which mediates electron transfer between photosystem II (PSII) and photosystem I (PSI), cyclic electron flow around PSI, and state transitions. PetG is required for either the stability or assembly of the cytochrome b6-f complex. In Synechococcus sp. (strain WH7803), this protein is Cytochrome b6-f complex subunit 5.